The primary structure comprises 160 residues: Cytosolic iron-sulfur assembly component 2A (160 aa).

Zn(2+)-binding residues include His89, His123, Glu150, and Glu153.

The protein belongs to the MIP18 family. Monomer and homodimer. Component of the CIA complex. Interacts with CIAO1. Interacts with IREB2. Interacts with APAF1.

The protein localises to the cytoplasm. Component of the cytosolic iron-sulfur protein assembly (CIA) complex, a multiprotein complex that mediates the incorporation of iron-sulfur cluster into extramitochondrial Fe/S proteins. As a CIA complex component and in collaboration with CIAO1 specifically matures ACO1 and stabilizes IREB2, connecting cytosolic iron-sulfur protein maturation with cellular iron regulation. May play a role in chromosome segregation through establishment of sister chromatid cohesion. May induce apoptosis in collaboration with APAF1. This chain is Cytosolic iron-sulfur assembly component 2A, found in Bos taurus (Bovine).